We begin with the raw amino-acid sequence, 237 residues long: Small ribosomal subunit protein uS17m (237 aa).

The protein belongs to the universal ribosomal protein uS17 family. As to quaternary structure, component of the mitochondrial small ribosomal subunit (mt-SSU). Mature yeast 74S mitochondrial ribosomes consist of a small (37S) and a large (54S) subunit. The 37S small subunit contains a 15S ribosomal RNA (15S mt-rRNA) and 34 different proteins. The 54S large subunit contains a 21S rRNA (21S mt-rRNA) and 46 different proteins.

It is found in the mitochondrion. Functionally, component of the mitochondrial ribosome (mitoribosome), a dedicated translation machinery responsible for the synthesis of mitochondrial genome-encoded proteins, including at least some of the essential transmembrane subunits of the mitochondrial respiratory chain. The mitoribosomes are attached to the mitochondrial inner membrane and translation products are cotranslationally integrated into the membrane. uS17m may have a meiosis-specific role as it accumulates during the middle stage of sporulation. This Saccharomyces cerevisiae (strain ATCC 204508 / S288c) (Baker's yeast) protein is Small ribosomal subunit protein uS17m (MRPS17).